We begin with the raw amino-acid sequence, 153 residues long: 3-hydroxyacyl-[acyl-carrier-protein] dehydratase FabZ (153 aa).

His58 is a catalytic residue.

The protein belongs to the thioester dehydratase family. FabZ subfamily.

Its subcellular location is the cytoplasm. The enzyme catalyses a (3R)-hydroxyacyl-[ACP] = a (2E)-enoyl-[ACP] + H2O. In terms of biological role, involved in unsaturated fatty acids biosynthesis. Catalyzes the dehydration of short chain beta-hydroxyacyl-ACPs and long chain saturated and unsaturated beta-hydroxyacyl-ACPs. This Bradyrhizobium diazoefficiens (strain JCM 10833 / BCRC 13528 / IAM 13628 / NBRC 14792 / USDA 110) protein is 3-hydroxyacyl-[acyl-carrier-protein] dehydratase FabZ.